A 281-amino-acid chain; its full sequence is Energy-coupling factor transporter ATP-binding protein EcfA1 (281 aa).

One can recognise an ABC transporter domain in the interval 7–242 (IAAEDITFRY…NQDLIKIGLD (236 aa)). Residue 42-49 (GHNGSGKS) participates in ATP binding.

It belongs to the ABC transporter superfamily. Energy-coupling factor EcfA family. In terms of assembly, forms a stable energy-coupling factor (ECF) transporter complex composed of 2 membrane-embedded substrate-binding proteins (S component), 2 ATP-binding proteins (A component) and 2 transmembrane proteins (T component).

It localises to the cell membrane. Functionally, ATP-binding (A) component of a common energy-coupling factor (ECF) ABC-transporter complex. Unlike classic ABC transporters this ECF transporter provides the energy necessary to transport a number of different substrates. This is Energy-coupling factor transporter ATP-binding protein EcfA1 from Bacillus licheniformis (strain ATCC 14580 / DSM 13 / JCM 2505 / CCUG 7422 / NBRC 12200 / NCIMB 9375 / NCTC 10341 / NRRL NRS-1264 / Gibson 46).